A 654-amino-acid chain; its full sequence is Smc-like protein Sph3 (654 aa).

Coiled-coil stretches lie at residues 135–290 (TDAI…LQTV) and 341–503 (IRGT…LTAA).

This sequence belongs to the Sph1/Sph2 family.

Its function is as follows. Involved in cell-shape determination. Required for the formation of rods and wild-type-like motility. The chain is Smc-like protein Sph3 from Haloferax volcanii (strain ATCC 29605 / DSM 3757 / JCM 8879 / NBRC 14742 / NCIMB 2012 / VKM B-1768 / DS2) (Halobacterium volcanii).